The sequence spans 69 residues: Small ribosomal subunit protein bS21 (69 aa).

Belongs to the bacterial ribosomal protein bS21 family.

This Hyphomonas neptunium (strain ATCC 15444) protein is Small ribosomal subunit protein bS21.